The following is a 1368-amino-acid chain: MQYSFTEKKRIRKSFAKRPIVHQVPFLLATQLESFSTFLQADVPATQRKPEGLQAAFTSVFPIVSHNGFARLEFVSYALSAPAFNIKECQQRGLTYCSALRAKVRLVILDKESPNKPVVKEVKEQEVYMGEIPLMTPTGSFVINGTERVIVSQLHRSPGVFFEHDKGKTHSSGKLLFSARIIPYRGSWLDFEFDPKDILYFRVDRRRKMPVTILLKAIGLTPEQILANFFVFDNFTLMDEGAQLEFVPERLRGEVARFDITDRDGKVIVQKDKRINAKHIRDLEAAKTKFISVPEDYLLGRVLAKNVVDGETGEVIANANDEITESVLEKLREAGIKEIQTLYTNDLDQGPYISSTLRVDETTDKTAARIAIYRMMRPGEPPTEEAVEALFNRLFYSEEAYDLSKVGRMKFNRRVGRDEITGPMTLQDDDILATIKILVELRNGKGEVDDIDHLGNRRVRCVGELAENQFRAGLVRVERAVKERLGQAESENLMPHDLINSKPISSAIREFFGSSQLSQFMDQTNPLSEITHKRRVSALGPGGLTRERAGFEVRDVHPTHYGRVCPIETPEGPNIGLINSLALYAHLNEYGFLETPYRKVVDGKVTDQIDYLSAIEEGRYMIAQANAAIDDEGRLTDELVSSREAGETMMVTPDRIQYMDVAPSQIVSVAASLIPFLEHDDANRALMGSNMQRQAVPCLRPEKPVVGTGIERTCAVDSGTTVQAFRGGVVDYVDAGRIVIRVNDDEAVAGEVGVDIYNLIKYTRSNQNTNINQRPIVKMGDKVSRGDVLADGASTDLGELALGQNMLIAFMPWNGYNFEDSILISEKVVADDRYTSIHIEELNVVARDTKLGPEEITRDISNLAEVQLGRLDESGIVYIGAEVEAGDVLVGKVTPKGETQLTPEEKLLRAIFGEKASDVKDTSLRVPSGMSGTVIDVQVFTREGIQRDKRAQQIIDDELKRYRLDLNDQLRIVEGDAFQRLARMLVGKVANGGPKKLAKGTKIDQAYLEDLDHYHWFDIRLADDEAAAQLEAIKNSIEEKRHQFDLAFEEKRKKLTQGDELPPGVLKMVKVYLAVKRRLQPGDKMAGRHGNKGVVSKIVPIEDMPYMADGRPADVVLNPLGVPSRMNVGQVLEVHLGWAAKGLGWRIGEMLQRQAKIEELRAFLTKIYNESGRAEDLDSFSDDEILELAKNLREGVPFATPVFDGATEDEMAKMLDLAFPDDIAKQLDMNPSKNQVRLYDGRTGEPFERRVTVGYMHYLKLHHLVDDKMHARSTGPYSLVTQQPLGGKAQFGGQRFGEMEVWALEAYGASYVLQEMLTVKSDDVTGRTKVYENLVKGDHVIDAGMPESFNVLVKEIRSLGIDIDLDRN.

It belongs to the RNA polymerase beta chain family. The RNAP catalytic core consists of 2 alpha, 1 beta, 1 beta' and 1 omega subunit. When a sigma factor is associated with the core the holoenzyme is formed, which can initiate transcription.

It catalyses the reaction RNA(n) + a ribonucleoside 5'-triphosphate = RNA(n+1) + diphosphate. DNA-dependent RNA polymerase catalyzes the transcription of DNA into RNA using the four ribonucleoside triphosphates as substrates. The sequence is that of DNA-directed RNA polymerase subunit beta from Burkholderia multivorans (strain ATCC 17616 / 249).